The sequence spans 1849 residues: Protein virilizer (1849 aa).

5 stretches are compositionally biased toward basic and acidic residues: residues 206-219 (QHYHQHVDEEQREM), 242-265 (THSESNEREYIRCSRDKGSRDWSR), 281-291 (RSRSDADEHKW), 332-347 (HSSESLHRDRDDEERS), and 785-818 (VEAKPEGKEDKPMDDSVEQKPDEGKAAGIRAAEE). Disordered stretches follow at residues 206 to 364 (QHYH…DEII), 783 to 818 (RVVEAKPEGKEDKPMDDSVEQKPDEGKAAGIRAAEE), 1557 to 1584 (SASMETPAVETENDGANPAASCSTSSSG), 1666 to 1686 (GESKRTLNLSGSPQSNREMTP), 1715 to 1782 (RGRG…NRGS), and 1798 to 1849 (IGSP…PYLR). The span at 1671 to 1684 (TLNLSGSPQSNREM) shows a compositional bias: polar residues. Over residues 1732-1742 (SRPPNTSRPPS) the composition is skewed to low complexity. Positions 1800–1818 (SPSSWTESGGGSYRSTSES) are enriched in polar residues.

It belongs to the vir family. In terms of assembly, component of the WMM complex, a N6-methyltransferase complex composed of a catalytic subcomplex, named MAC, and of an associated subcomplex, named MACOM. The MAC subcomplex is composed of Ime4/Mettl3 and Mettl14. The MACOM subcomplex is composed of fl(2)d, Flacc/Xio, Hakai, vir, and, in some cases of nito. Part of a complex containing fl(2)d, Sxl and vir.

The protein resides in the nucleus. Associated component of the WMM complex, a complex that mediates N6-methyladenosine (m6A) methylation of mRNAs, a modification that plays a role in the efficiency of mRNA splicing and is required for sex determination. Required for sex determination and dosage compensation via Sxl alternative splicing: m6A methylation acts as a key regulator of Sxl pre-mRNA and promotes female-specific alternative splicing of Sxl, which determines female physiognomy. M6A methylation is also required for neuronal functions. Required for proper inclusion of regulated exons in Ubx transcripts, leading to isoforms Ia/b and IIa/b. The chain is Protein virilizer (vir) from Drosophila pseudoobscura pseudoobscura (Fruit fly).